Here is a 2072-residue protein sequence, read N- to C-terminus: Protein still life, isoform SIF type 1 (2072 aa).

Glycine 2 carries the N-myristoyl glycine lipid modification. The 119-residue stretch at arginine 29–serine 147 folds into the WH1 domain. Disordered stretches follow at residues serine 153–cysteine 188, aspartate 245–threonine 284, glutamate 327–aspartate 355, asparagine 459–proline 486, glutamate 502–serine 576, alanine 618–arginine 655, and serine 699–alanine 747. Polar residues predominate over residues valine 275–threonine 284. 3 stretches are compositionally biased toward low complexity: residues serine 338–threonine 351, asparagine 459–arginine 476, and serine 522–arginine 553. The span at alanine 564 to serine 576 shows a compositional bias: polar residues. Positions isoleucine 634–arginine 655 are enriched in basic and acidic residues. The segment covering serine 732–glycine 743 has biased composition (polar residues). A PH domain is found at threonine 840 to phenylalanine 958. Positions glycine 1088–proline 1119 are disordered. Residues serine 1100–asparagine 1114 are compositionally biased toward low complexity. One can recognise an RBD domain in the interval lysine 1121–tyrosine 1188. The PDZ domain occupies glutamine 1204 to threonine 1293. Residues alanine 1403–alanine 1424 are disordered. Positions serine 1410–alanine 1424 are enriched in low complexity. In terms of domain architecture, DH spans lysine 1436–methionine 1630. Disordered regions lie at residues methionine 1803–threonine 1832, histidine 1844–valine 2039, and proline 2051–asparagine 2072. Low complexity-rich tracts occupy residues glycine 1811–methionine 1821 and glutamine 1926–histidine 1943. The span at histidine 1970 to glutamate 1984 shows a compositional bias: basic and acidic residues. Over residues leucine 2007–serine 2022 the composition is skewed to low complexity. A compositionally biased stretch (polar residues) spans glutamine 2023–proline 2032.

Expressed in both larval and adult brains, mainly in a subset of neurons but not in glia. In the adult eye is expressed in the two primary pigment cells in the subapical region of the eye. Also present in photoreceptors.

The protein resides in the synapse. In terms of biological role, regulates synaptic differentiation through the organization of actin cytoskeleton possibly by activating Rho-like GTPases. Is likely a factor in the cascade of Rac1 or Cdc42 in the neurons. May play a role in maintaining proper septate junction functions. Required for eye development and most likely affects corneal lens-formation. This Drosophila melanogaster (Fruit fly) protein is Protein still life, isoform SIF type 1 (sif).